We begin with the raw amino-acid sequence, 396 residues long: Phosphoglycerate kinase (396 aa).

Substrate-binding positions include 22–24 (DLN), arginine 37, 60–63 (HFGR), arginine 118, and arginine 151. Residues lysine 201, glutamate 323, and 353–356 (GGDT) contribute to the ATP site.

This sequence belongs to the phosphoglycerate kinase family. In terms of assembly, monomer.

It localises to the cytoplasm. It carries out the reaction (2R)-3-phosphoglycerate + ATP = (2R)-3-phospho-glyceroyl phosphate + ADP. It functions in the pathway carbohydrate degradation; glycolysis; pyruvate from D-glyceraldehyde 3-phosphate: step 2/5. The sequence is that of Phosphoglycerate kinase from Azorhizobium caulinodans (strain ATCC 43989 / DSM 5975 / JCM 20966 / LMG 6465 / NBRC 14845 / NCIMB 13405 / ORS 571).